The sequence spans 1070 residues: DNA-directed RNA polymerase subunit beta (1070 aa).

Belongs to the RNA polymerase beta chain family. As to quaternary structure, in plastids the minimal PEP RNA polymerase catalytic core is composed of four subunits: alpha, beta, beta', and beta''. When a (nuclear-encoded) sigma factor is associated with the core the holoenzyme is formed, which can initiate transcription.

The protein resides in the plastid. It is found in the chloroplast. The catalysed reaction is RNA(n) + a ribonucleoside 5'-triphosphate = RNA(n+1) + diphosphate. DNA-dependent RNA polymerase catalyzes the transcription of DNA into RNA using the four ribonucleoside triphosphates as substrates. In Vitis vinifera (Grape), this protein is DNA-directed RNA polymerase subunit beta.